The primary structure comprises 939 residues: Isoleucine--tRNA ligase (939 aa).

The 'HIGH' region signature appears at 58–68 (PYANGNIHIGH). L-isoleucyl-5'-AMP is bound at residue Glu562. The 'KMSKS' region motif lies at 603-607 (KMSKS). Lys606 is an ATP binding site. Zn(2+) contacts are provided by Cys903, Cys906, Cys922, and Cys925.

This sequence belongs to the class-I aminoacyl-tRNA synthetase family. IleS type 1 subfamily. As to quaternary structure, monomer. Zn(2+) serves as cofactor.

It localises to the cytoplasm. The catalysed reaction is tRNA(Ile) + L-isoleucine + ATP = L-isoleucyl-tRNA(Ile) + AMP + diphosphate. Functionally, catalyzes the attachment of isoleucine to tRNA(Ile). As IleRS can inadvertently accommodate and process structurally similar amino acids such as valine, to avoid such errors it has two additional distinct tRNA(Ile)-dependent editing activities. One activity is designated as 'pretransfer' editing and involves the hydrolysis of activated Val-AMP. The other activity is designated 'posttransfer' editing and involves deacylation of mischarged Val-tRNA(Ile). This Buchnera aphidicola subsp. Baizongia pistaciae (strain Bp) protein is Isoleucine--tRNA ligase.